The chain runs to 643 residues: Phosphomethylpyrimidine synthase (643 aa).

Substrate contacts are provided by residues Asn-248, Met-277, Tyr-306, His-342, 362–364, 403–406, and Glu-442; these read SRG and DGLR. His-446 is a Zn(2+) binding site. Tyr-469 contacts substrate. His-510 provides a ligand contact to Zn(2+). Residues Cys-590, Cys-593, and Cys-598 each coordinate [4Fe-4S] cluster.

This sequence belongs to the ThiC family. As to quaternary structure, homodimer. The cofactor is [4Fe-4S] cluster.

The catalysed reaction is 5-amino-1-(5-phospho-beta-D-ribosyl)imidazole + S-adenosyl-L-methionine = 4-amino-2-methyl-5-(phosphooxymethyl)pyrimidine + CO + 5'-deoxyadenosine + formate + L-methionine + 3 H(+). It functions in the pathway cofactor biosynthesis; thiamine diphosphate biosynthesis. Its function is as follows. Catalyzes the synthesis of the hydroxymethylpyrimidine phosphate (HMP-P) moiety of thiamine from aminoimidazole ribotide (AIR) in a radical S-adenosyl-L-methionine (SAM)-dependent reaction. In Burkholderia ambifaria (strain ATCC BAA-244 / DSM 16087 / CCUG 44356 / LMG 19182 / AMMD) (Burkholderia cepacia (strain AMMD)), this protein is Phosphomethylpyrimidine synthase.